A 421-amino-acid chain; its full sequence is Zinc metalloproteinase-disintegrin-like lachestatin-1 (421 aa).

One can recognise a Peptidase M12B domain in the interval 10-206 (KYVKLVLVAD…DMPQCILEKP (197 aa)). 3 disulfides stabilise this stretch: cysteine 121–cysteine 201, cysteine 161–cysteine 185, and cysteine 163–cysteine 168. Zn(2+) is bound at residue histidine 146. Residue glutamate 147 is part of the active site. Zn(2+)-binding residues include histidine 150 and histidine 156. The Disintegrin domain maps to 214–299 (PPVCGNYFVE…AECTDRFQRN (86 aa)). Positions 216, 219, 221, 223, 226, and 229 each coordinate Ca(2+). Intrachain disulfides connect cysteine 217–cysteine 246, cysteine 228–cysteine 241, cysteine 230–cysteine 236, cysteine 240–cysteine 263, cysteine 254–cysteine 260, cysteine 259–cysteine 285, cysteine 272–cysteine 292, cysteine 279–cysteine 310, cysteine 303–cysteine 315, cysteine 322–cysteine 372, cysteine 337–cysteine 383, cysteine 350–cysteine 360, cysteine 367–cysteine 409, and cysteine 403–cysteine 414. Residues 278–280 (ECD) carry the D/ECD-tripeptide motif. Ca(2+) contacts are provided by aspartate 280, methionine 281, aspartate 283, aspartate 294, and arginine 295. N-linked (GlcNAc...) asparagine glycosylation is present at asparagine 312.

Belongs to the venom metalloproteinase (M12B) family. P-III subfamily. P-IIIc sub-subfamily. Homodimer; disulfide-linked. It depends on Zn(2+) as a cofactor. In terms of tissue distribution, expressed by the venom gland.

Its subcellular location is the secreted. Snake venom zinc metalloprotease that induces apoptosis in vascular endothelial cells (VEC), without degrading the extracellular matrix (it cannot cleave collagen) or inhibiting adhesion of VEC. Has also fibrinogenolytic and hemorrhagic activities. This Lachesis muta rhombeata (Bushmaster) protein is Zinc metalloproteinase-disintegrin-like lachestatin-1.